The following is a 511-amino-acid chain: Peroxisomal N(1)-acetyl-spermine/spermidine oxidase (511 aa).

N-acetylmethionine is present on Met1. FAD contacts are provided by residues Ala24, Glu45, Arg53, and His69 to Trp70. Substrate is bound by residues His72 and Val194. FAD is bound at residue Val247. Position 320 (Asn320) interacts with substrate. Residues Glu472 and Thr481–Thr482 contribute to the FAD site. The short motif at Pro509 to Leu511 is the Microbody targeting signal element.

This sequence belongs to the flavin monoamine oxidase family. In terms of assembly, monomer. Requires FAD as cofactor. Widely expressed. Not detected in spleen. Expressed at lower level in neoplastic tissues.

It localises to the peroxisome. The protein resides in the cytoplasm. The catalysed reaction is N(1)-acetylspermine + O2 + H2O = 3-acetamidopropanal + spermidine + H2O2. The enzyme catalyses N(1)-acetylspermidine + O2 + H2O = 3-acetamidopropanal + putrescine + H2O2. It catalyses the reaction N(1),N(12)-diacetylspermine + O2 + H2O = 3-acetamidopropanal + N(1)-acetylspermidine + H2O2. Its pathway is amine and polyamine metabolism; spermine metabolism. Flavoenzyme which catalyzes the oxidation of N(1)-acetylspermine to spermidine and is thus involved in the polyamine back-conversion. Can also oxidize N(1)-acetylspermidine to putrescine. Substrate specificity: N(1)-acetylspermine = N(1)-acetylspermidine &gt; N(1),N(12)-diacylspermine &gt;&gt; spermine. Does not oxidize spermidine. Plays an important role in the regulation of polyamine intracellular concentration and has the potential to act as a determinant of cellular sensitivity to the antitumor polyamine analogs. The sequence is that of Peroxisomal N(1)-acetyl-spermine/spermidine oxidase (PAOX) from Homo sapiens (Human).